Consider the following 373-residue polypeptide: MSVKTQTITVLPGDHVGTEIVNEPTKVLKAIEAPTPYQKIQFDFKHHLIGGAAIDATGVPLPDDALESAKSSDAVLLGAVGGPKWGTGTVRPEQGLLKIRKELNLYANIRPCNFASDSLLELSPLKAEVVKGTNLIIVRELVGGIYFGERQEQEESEDHQTAWYRPKYTVDEVTRITRMAAFMALQHNPPLPIWSLDKANVLASSRLWRKTVDKVISEEFPALSVQHQLIDSAAMILIQNPTKLSGIIITSNMFGDIISDEASVIPGSLGLLPSASLASLPDTNTAFGLYEPCHGSAPDLPANKVNPIATILSAASMLRLALDCVKETEALEEAVKQVLDSGIRTADLRGTSSTTEVGDAIAETVTKILKQNT.

Residue 82–93 (GPKWGTGTVRPE) coordinates NAD(+). Arg-100, Arg-110, Arg-139, and Asp-231 together coordinate substrate. Asp-231, Asp-256, and Asp-260 together coordinate Mg(2+). Position 295–306 (295–306 (GSAPDLPANKVN)) interacts with NAD(+).

It belongs to the isocitrate and isopropylmalate dehydrogenases family. Homodimer. The cofactor is Mg(2+). Mn(2+) serves as cofactor.

The protein localises to the cytoplasm. The enzyme catalyses (2R,3S)-3-isopropylmalate + NAD(+) = 4-methyl-2-oxopentanoate + CO2 + NADH. It participates in amino-acid biosynthesis; L-leucine biosynthesis; L-leucine from 3-methyl-2-oxobutanoate: step 3/4. Functionally, catalyzes the oxidation of 3-carboxy-2-hydroxy-4-methylpentanoate (3-isopropylmalate) to 3-carboxy-4-methyl-2-oxopentanoate. The product decarboxylates to 4-methyl-2 oxopentanoate. The sequence is that of 3-isopropylmalate dehydrogenase (LEU2) from Candida albicans (Yeast).